We begin with the raw amino-acid sequence, 189 residues long: Ribose 1,5-bisphosphate phosphokinase PhnN (189 aa).

10–17 (GPSGSGKD) serves as a coordination point for ATP.

This sequence belongs to the ribose 1,5-bisphosphokinase family.

The catalysed reaction is alpha-D-ribose 1,5-bisphosphate + ATP = 5-phospho-alpha-D-ribose 1-diphosphate + ADP. It participates in metabolic intermediate biosynthesis; 5-phospho-alpha-D-ribose 1-diphosphate biosynthesis; 5-phospho-alpha-D-ribose 1-diphosphate from D-ribose 5-phosphate (route II): step 3/3. Its function is as follows. Catalyzes the phosphorylation of ribose 1,5-bisphosphate to 5-phospho-D-ribosyl alpha-1-diphosphate (PRPP). The chain is Ribose 1,5-bisphosphate phosphokinase PhnN from Enterobacter lignolyticus (strain SCF1).